The primary structure comprises 104 residues: Pterin-4-alpha-carbinolamine dehydratase (104 aa).

Ala2 is subject to N-acetylalanine. Substrate contacts are provided by residues 61–63 (DHH) and 78–81 (STHE).

This sequence belongs to the pterin-4-alpha-carbinolamine dehydratase family. As to quaternary structure, homotetramer and homodimer. In terms of tissue distribution, the major tissues expressing cDcoH are hypothalamus, kidney and liver.

Its subcellular location is the cytoplasm. The protein resides in the nucleus. It carries out the reaction (4aS,6R)-4a-hydroxy-L-erythro-5,6,7,8-tetrahydrobiopterin = (6R)-L-erythro-6,7-dihydrobiopterin + H2O. Functionally, involved in tetrahydrobiopterin biosynthesis. Seems to both prevent the formation of 7-pterins and accelerate the formation of quinonoid-BH2. Coactivator for HNF1A-dependent transcription. Regulates the dimerization of homeodomain protein HNF1A and enhances its transcriptional activity. Also acts as a coactivator for HNF1B-dependent transcription. The polypeptide is Pterin-4-alpha-carbinolamine dehydratase (PCBD1) (Gallus gallus (Chicken)).